A 228-amino-acid chain; its full sequence is Ribonuclease H (228 aa).

The RNase H type-1 domain maps to 2-142 (GPMRTIVYAD…ADRLATLGRR (141 aa)). Residues Asp11, Glu49, Asp71, and Asp134 each coordinate Mg(2+).

This sequence belongs to the RNase H family. In terms of assembly, monomer. It depends on Mg(2+) as a cofactor.

The protein localises to the cytoplasm. It carries out the reaction Endonucleolytic cleavage to 5'-phosphomonoester.. Functionally, endonuclease that specifically degrades the RNA of RNA-DNA hybrids. The polypeptide is Ribonuclease H (Methylorubrum extorquens (strain PA1) (Methylobacterium extorquens)).